The chain runs to 101 residues: Thioredoxin 1 (101 aa).

The Thioredoxin domain occupies 2–101; that stretch reads AQTLDDLIRT…MRQEVLKAIG (100 aa). The cysteines at positions 25 and 28 are disulfide-linked.

Belongs to the thioredoxin family.

Participates in various redox reactions through the reversible oxidation of its active center dithiol to a disulfide and catalyzes dithiol-disulfide exchange reactions. The chain is Thioredoxin 1 (trx1) from Chlorobaculum tepidum (strain ATCC 49652 / DSM 12025 / NBRC 103806 / TLS) (Chlorobium tepidum).